A 65-amino-acid polypeptide reads, in one-letter code: Large ribosomal subunit protein bL35 (65 aa).

Positions 1–16 (MPKMKTKKSAAKRFKV) are enriched in basic residues. A disordered region spans residues 1-25 (MPKMKTKKSAAKRFKVRGSGSIKRG).

This sequence belongs to the bacterial ribosomal protein bL35 family.

The polypeptide is Large ribosomal subunit protein bL35 (Bordetella parapertussis (strain 12822 / ATCC BAA-587 / NCTC 13253)).